We begin with the raw amino-acid sequence, 239 residues long: MSNKKDIAVKNSGGKKIREAREKVKSDTLYNLTNAVERLKSASYVKFDPTLEIVMKLGIDPRHSDQMIRGVVNLPAGTGKTVRVAVICKAERVEEAKSAGADLVGSTSIIDEIKAGKINFDVCIATPDMMAAIGSVARILGPKGLMPNPKLGTVTLDIKNAIKNAKSGQVEYRAEKAGIIHAGLGKLSFSDQDLLQNLNEFIEAVIKAKPAGLKGSYLKAMYLSSTMGASVQIDLTSIA.

It belongs to the universal ribosomal protein uL1 family. In terms of assembly, part of the 50S ribosomal subunit.

Binds directly to 23S rRNA. The L1 stalk is quite mobile in the ribosome, and is involved in E site tRNA release. Its function is as follows. Protein L1 is also a translational repressor protein, it controls the translation of the L11 operon by binding to its mRNA. This chain is Large ribosomal subunit protein uL1, found in Rickettsia canadensis (strain McKiel).